Reading from the N-terminus, the 279-residue chain is Pantothenate synthetase (279 aa).

Met-26–His-33 serves as a coordination point for ATP. The Proton donor role is filled by His-33. Residue Gln-57 coordinates (R)-pantoate. A beta-alanine-binding site is contributed by Gln-57. An ATP-binding site is contributed by Gly-144–Asp-147. Gln-150 is a (R)-pantoate binding site. ATP is bound by residues Val-173 and Leu-181–Arg-184.

The protein belongs to the pantothenate synthetase family. As to quaternary structure, homodimer.

The protein resides in the cytoplasm. The enzyme catalyses (R)-pantoate + beta-alanine + ATP = (R)-pantothenate + AMP + diphosphate + H(+). It functions in the pathway cofactor biosynthesis; (R)-pantothenate biosynthesis; (R)-pantothenate from (R)-pantoate and beta-alanine: step 1/1. Its function is as follows. Catalyzes the condensation of pantoate with beta-alanine in an ATP-dependent reaction via a pantoyl-adenylate intermediate. In Burkholderia mallei (strain NCTC 10229), this protein is Pantothenate synthetase.